The primary structure comprises 464 residues: uncharacterized protein (464 aa).

Positions 13 to 71 (MLKVSDIIQIKIDKIVFGGEGLGYYNGFAVFVPMSIPEDELEIEIISIKKTYARGLIKN) constitute a TRAM domain. Residues Gln-295, Tyr-324, Glu-345, and Asp-393 each coordinate S-adenosyl-L-methionine. Catalysis depends on Cys-420, which acts as the Nucleophile.

This sequence belongs to the class I-like SAM-binding methyltransferase superfamily. RNA M5U methyltransferase family.

This is an uncharacterized protein from Fusobacterium nucleatum subsp. nucleatum (strain ATCC 25586 / DSM 15643 / BCRC 10681 / CIP 101130 / JCM 8532 / KCTC 2640 / LMG 13131 / VPI 4355).